We begin with the raw amino-acid sequence, 326 residues long: Serine protease 38 (326 aa).

Positions 1–32 are cleaved as a signal peptide; sequence MAAPASVMGPLGPSALGLLLLLLVVAPPRVAA. The propeptide at 33–59 is activation peptide; it reads LVHRQPENQGISLTGSVACGRPSMEGK. Residues 60–293 enclose the Peptidase S1 domain; that stretch reads ILGGVPAPER…FSKWICDNIE (234 aa). Cysteines 85 and 101 form a disulfide. His100 (charge relay system) is an active-site residue. A glycan (N-linked (GlcNAc...) asparagine) is linked at Asn125. Residue Asp150 is the Charge relay system of the active site. 3 disulfide bridges follow: Cys183/Cys251, Cys214/Cys230, and Cys241/Cys269. The active-site Charge relay system is Ser245.

It belongs to the peptidase S1 family.

It localises to the secreted. This Homo sapiens (Human) protein is Serine protease 38 (PRSS38).